Consider the following 211-residue polypeptide: Thymidylate kinase (211 aa).

Gly10 to Thr17 lines the ATP pocket.

Belongs to the thymidylate kinase family.

The catalysed reaction is dTMP + ATP = dTDP + ADP. In terms of biological role, phosphorylation of dTMP to form dTDP in both de novo and salvage pathways of dTTP synthesis. In Nostoc punctiforme (strain ATCC 29133 / PCC 73102), this protein is Thymidylate kinase.